Here is a 354-residue protein sequence, read N- to C-terminus: Uroporphyrinogen decarboxylase (354 aa).

Substrate-binding positions include 27-31 (RQAGR), D77, Y154, T209, and H327.

It belongs to the uroporphyrinogen decarboxylase family. In terms of assembly, homodimer.

It is found in the cytoplasm. The enzyme catalyses uroporphyrinogen III + 4 H(+) = coproporphyrinogen III + 4 CO2. The protein operates within porphyrin-containing compound metabolism; protoporphyrin-IX biosynthesis; coproporphyrinogen-III from 5-aminolevulinate: step 4/4. Its function is as follows. Catalyzes the decarboxylation of four acetate groups of uroporphyrinogen-III to yield coproporphyrinogen-III. This Salmonella arizonae (strain ATCC BAA-731 / CDC346-86 / RSK2980) protein is Uroporphyrinogen decarboxylase.